The primary structure comprises 558 residues: Formate--tetrahydrofolate ligase (558 aa).

Position 67 to 74 (67 to 74 (TPAGEGKT)) interacts with ATP.

The protein belongs to the formate--tetrahydrofolate ligase family.

The enzyme catalyses (6S)-5,6,7,8-tetrahydrofolate + formate + ATP = (6R)-10-formyltetrahydrofolate + ADP + phosphate. It functions in the pathway one-carbon metabolism; tetrahydrofolate interconversion. The polypeptide is Formate--tetrahydrofolate ligase (Ruegeria pomeroyi (strain ATCC 700808 / DSM 15171 / DSS-3) (Silicibacter pomeroyi)).